Reading from the N-terminus, the 66-residue chain is Large ribosomal subunit protein bL35 (66 aa).

Composition is skewed to basic residues over residues 1–26 (MPKM…KRSH) and 38–48 (QKQKRKLRKSA). Positions 1-48 (MPKMKTHKGAAKRFKKTGSGKLKRSHAFTSHLFANKSQKQKRKLRKSA) are disordered.

This sequence belongs to the bacterial ribosomal protein bL35 family.

This chain is Large ribosomal subunit protein bL35, found in Halalkalibacterium halodurans (strain ATCC BAA-125 / DSM 18197 / FERM 7344 / JCM 9153 / C-125) (Bacillus halodurans).